A 428-amino-acid polypeptide reads, in one-letter code: Peptidase B (428 aa).

Mn(2+) contacts are provided by Lys-195 and Asp-200. The active site involves Lys-207. The Mn(2+) site is built by Asp-218, Asp-277, and Glu-279. Residue Arg-281 is part of the active site.

This sequence belongs to the peptidase M17 family. As to quaternary structure, homohexamer. Mn(2+) is required as a cofactor.

It is found in the cytoplasm. The enzyme catalyses Release of an N-terminal amino acid, Xaa, from a peptide or arylamide. Xaa is preferably Glu or Asp but may be other amino acids, including Leu, Met, His, Cys and Gln.. In terms of biological role, probably plays an important role in intracellular peptide degradation. The polypeptide is Peptidase B (Klebsiella pneumoniae subsp. pneumoniae (strain ATCC 700721 / MGH 78578)).